A 116-amino-acid chain; its full sequence is Beta-2-microglobulin (116 aa).

The signal sequence occupies residues 1-19 (MRAIITFALFCVLYITVQA). Residues 24 to 111 (PKVQVYSHFP…RHMSNTNAYS (88 aa)) form the Ig-like C1-type domain. An intrachain disulfide couples Cys-44 to Cys-99.

The protein belongs to the beta-2-microglobulin family. In terms of assembly, heterodimer of an alpha chain and a beta chain. Beta-2-microglobulin is the beta-chain of major histocompatibility complex class I molecules.

Its subcellular location is the secreted. In terms of biological role, component of the class I major histocompatibility complex (MHC). Involved in the presentation of peptide antigens to the immune system. In Labeobarbus intermedius (Lake tana barbels), this protein is Beta-2-microglobulin (b2m).